Consider the following 534-residue polypeptide: Monolignol oxidoreductase AtBBE-like 13 (534 aa).

A signal peptide spans 1–29 (MAFVLMNNTNAFLVTLLLLSLSYIPLSFS). Residues Asn-7 and Asn-59 are each glycosylated (N-linked (GlcNAc...) asparagine). A disulfide bridge links Cys-38 with Cys-102. A cross-link (6-(S-cysteinyl)-8alpha-(pros-histidyl)-FAD (His-Cys)) is located at residues 117–181 (HDYEGLSYVS…KIHGFPAGLC (65 aa)).

The protein belongs to the oxygen-dependent FAD-linked oxidoreductase family. FAD serves as cofactor. The FAD cofactor is bound via a bicovalent 6-S-cysteinyl, 8alpha-N1-histidyl FAD linkage.

The protein localises to the secreted. Its subcellular location is the cell wall. It carries out the reaction (E)-4-coumaroyl alcohol + A = (E)-4-coumaraldehyde + AH2. The catalysed reaction is (E)-coniferol + A = (E)-coniferaldehyde + AH2. It catalyses the reaction (E)-sinapyl alcohol + A = (E)-sinapaldehyde + AH2. The protein operates within phenylpropanoid metabolism. In terms of biological role, mediates oxidation of p-hydroxylated derivatives of cinnamyl alcohol (i.e. the monolignols p-coumaryl-, coniferyl-, and sinapyl alcohol) to their corresponding aldehydes. The electron acceptor required for these reactions is not known, but does not seem to be dioxygen. Is much less efficient towards cinnamyl alcohol. The protein is Monolignol oxidoreductase AtBBE-like 13 of Arabidopsis thaliana (Mouse-ear cress).